The following is a 393-amino-acid chain: NAD(P)H-quinone oxidoreductase subunit H, chloroplastic (393 aa).

This sequence belongs to the complex I 49 kDa subunit family. NDH is composed of at least 16 different subunits, 5 of which are encoded in the nucleus.

It localises to the plastid. The protein resides in the chloroplast thylakoid membrane. The enzyme catalyses a plastoquinone + NADH + (n+1) H(+)(in) = a plastoquinol + NAD(+) + n H(+)(out). It carries out the reaction a plastoquinone + NADPH + (n+1) H(+)(in) = a plastoquinol + NADP(+) + n H(+)(out). Functionally, NDH shuttles electrons from NAD(P)H:plastoquinone, via FMN and iron-sulfur (Fe-S) centers, to quinones in the photosynthetic chain and possibly in a chloroplast respiratory chain. The immediate electron acceptor for the enzyme in this species is believed to be plastoquinone. Couples the redox reaction to proton translocation, and thus conserves the redox energy in a proton gradient. The protein is NAD(P)H-quinone oxidoreductase subunit H, chloroplastic of Chlorokybus atmophyticus (Soil alga).